The sequence spans 281 residues: Tumor necrosis factor ligand superfamily member 6 (281 aa).

The Cytoplasmic portion of the chain corresponds to 1-80 (MQQPFNYPYP…LKKRGNHSTG (80 aa)). Residues 20–71 (SSPWAPPGTVLPCPTSVPRRPGQRRPPPPPPPPPLPPPPPPPPLPPLPLPPL) form a disordered region. A compositionally biased stretch (pro residues) spans 43–70 (RRPPPPPPPPPLPPPPPPPPLPPLPLPP). A helical; Signal-anchor for type II membrane protein membrane pass occupies residues 81–102 (LCLLVMFFMVLVALVGLGLGMF). Topologically, residues 103–281 (QLFHLQKELA…SQTFFGLYKL (179 aa)) are extracellular. A compositionally biased stretch (polar residues) spans 118–128 (TSQMHTASSLE). A disordered region spans residues 118–142 (TSQMHTASSLEKQIGHPSPPPEKKE). The THD domain maps to 145-281 (KVAHLTGKSN…SQTFFGLYKL (137 aa)). An N-linked (GlcNAc...) asparagine glycan is attached at Asn-184. An intrachain disulfide couples Cys-202 to Cys-233. N-linked (GlcNAc...) asparagine glycans are attached at residues Asn-250 and Asn-260.

This sequence belongs to the tumor necrosis factor family. As to quaternary structure, homotrimer. Interacts with ARHGAP9, BAIAP2L1, BTK, CACNB3, CACNB4, CRK, DLG2, DNMBP, DOCK4, EPS8L3, FGR, FYB1, FYN, HCK, ITK, ITSN2, KALRN, LYN, MACC1, MIA, MPP4, MYO15A, NCF1, NCK1, NCK2, NCKIPSD, OSTF1, PIK3R1, PSTPIP1, RIMBP3C, SAMSN1, SH3GL3, SH3PXD2B, SH3PXD2A, SH3RF2, SKAP2, SNX33, SNX9, SORBS3, SPTA1, SRC, SRGAP1, SRGAP2, SRGAP3, TEC, TJP3 and YES1. Post-translationally, the soluble form derives from the membrane form by proteolytic processing. The membrane-bound form undergoes two successive intramembrane proteolytic cleavages. The first one is processed by ADAM10 producing an N-terminal fragment, which lacks the receptor-binding extracellular domain. This ADAM10-processed FasL (FasL APL) remnant form is still membrane anchored and further processed by SPPL2A that liberates the FasL intracellular domain (FasL ICD). FasL shedding by ADAM10 is a prerequisite for subsequent intramembrane cleavage by SPPL2A in T-cells. N-glycosylated. Glycosylation enhances apoptotic activity. In terms of processing, phosphorylated by FGR on tyrosine residues; this is required for ubiquitination and subsequent internalization. Post-translationally, monoubiquitinated.

Its subcellular location is the cell membrane. The protein resides in the cytoplasmic vesicle lumen. It is found in the lysosome lumen. It localises to the secreted. The protein localises to the nucleus. In terms of biological role, cytokine that binds to TNFRSF6/FAS, a receptor that transduces the apoptotic signal into cells. Involved in cytotoxic T-cell-mediated apoptosis, natural killer cell-mediated apoptosis and in T-cell development. Initiates fratricidal/suicidal activation-induced cell death (AICD) in antigen-activated T-cells contributing to the termination of immune responses. TNFRSF6/FAS-mediated apoptosis also has a role in the induction of peripheral tolerance. Binds to TNFRSF6B/DcR3, a decoy receptor that blocks apoptosis. Its function is as follows. Induces FAS-mediated activation of NF-kappa-B, initiating non-apoptotic signaling pathways. Can induce apoptosis but does not appear to be essential for this process. Functionally, cytoplasmic form induces gene transcription inhibition. The sequence is that of Tumor necrosis factor ligand superfamily member 6 (FASLG) from Homo sapiens (Human).